Here is a 450-residue protein sequence, read N- to C-terminus: tRNA modification GTPase MnmE (450 aa).

3 residues coordinate (6S)-5-formyl-5,6,7,8-tetrahydrofolate: R20, E78, and K117. The region spanning 211-372 (GFRMVIVGKP…LEEAIYRETQ (162 aa)) is the TrmE-type G domain. K(+) is bound at residue N221. Residues 221–226 (NVGKST), 240–246 (TDIPGTT), and 265–268 (DTAG) each bind GTP. Residue S225 coordinates Mg(2+). Residues T240, I242, and T245 each coordinate K(+). T246 is a Mg(2+) binding site. K450 contacts (6S)-5-formyl-5,6,7,8-tetrahydrofolate.

It belongs to the TRAFAC class TrmE-Era-EngA-EngB-Septin-like GTPase superfamily. TrmE GTPase family. In terms of assembly, homodimer. Heterotetramer of two MnmE and two MnmG subunits. Requires K(+) as cofactor.

The protein resides in the cytoplasm. In terms of biological role, exhibits a very high intrinsic GTPase hydrolysis rate. Involved in the addition of a carboxymethylaminomethyl (cmnm) group at the wobble position (U34) of certain tRNAs, forming tRNA-cmnm(5)s(2)U34. The polypeptide is tRNA modification GTPase MnmE (Thermotoga petrophila (strain ATCC BAA-488 / DSM 13995 / JCM 10881 / RKU-1)).